The following is a 103-amino-acid chain: Large ribosomal subunit protein bL21 (103 aa).

Belongs to the bacterial ribosomal protein bL21 family. In terms of assembly, part of the 50S ribosomal subunit. Contacts protein L20.

In terms of biological role, this protein binds to 23S rRNA in the presence of protein L20. The sequence is that of Large ribosomal subunit protein bL21 from Pectobacterium carotovorum subsp. carotovorum (strain PC1).